Consider the following 412-residue polypeptide: Peptidase T (412 aa).

His-83 contacts Zn(2+). Residue Asp-85 is part of the active site. Residue Asp-145 participates in Zn(2+) binding. Residue Glu-179 is the Proton acceptor of the active site. Zn(2+) contacts are provided by Glu-180, Asp-202, and His-384.

It belongs to the peptidase M20B family. It depends on Zn(2+) as a cofactor.

It localises to the cytoplasm. The catalysed reaction is Release of the N-terminal residue from a tripeptide.. Functionally, cleaves the N-terminal amino acid of tripeptides. In Fusobacterium nucleatum subsp. nucleatum (strain ATCC 25586 / DSM 15643 / BCRC 10681 / CIP 101130 / JCM 8532 / KCTC 2640 / LMG 13131 / VPI 4355), this protein is Peptidase T.